A 439-amino-acid polypeptide reads, in one-letter code: uncharacterized protein (439 aa).

The region spanning Pro273–Ser439 is the VWFA domain.

This is an uncharacterized protein from Methanocaldococcus jannaschii (strain ATCC 43067 / DSM 2661 / JAL-1 / JCM 10045 / NBRC 100440) (Methanococcus jannaschii).